The primary structure comprises 919 residues: TRPM8 channel-associated factor 2 (919 aa).

The region spanning 543-842 (DVWMSTGLYL…TYLQLQEVFG (300 aa)) is the Peptidase M60 domain.

This sequence belongs to the TCAF family. In terms of assembly, interacts with TRPM8 (via N-terminus and C-terminus domains); the interaction inhibits TRPM8 channel activity. Interacts with TRPV6.

The protein resides in the cell membrane. Negatively regulates the plasma membrane cation channel TRPM8 activity. Involved in the recruitment of TRPM8 to the cell surface. Promotes prostate cancer cell migration stimulation in a TRPM8-dependent manner. This chain is TRPM8 channel-associated factor 2, found in Mus musculus (Mouse).